The chain runs to 436 residues: MEIIRGFAPAEKRLSRRDKAGFFLDETQRAELAKRLGVDPEKAVNGIIDDIRKQGDKAVLEYTLKFDRAAISKLEVSPAEIKQAAGEIPAELFEALKLAATQVRAYHHFQKEAVWKAAEIMQGKQLIRPLERVGLYVPGGKAFYPSTVLMTAIPAKEAGVDEIILVTPPGADGKIPAPTLAAAYIAGVDKVFACGGAQAVAALAFGTKSIPKVDKICGPGNIFVTLAKKAVFGVVDIDGLQGPSEVLILADQYANAEYCASDILAQAEHDVLASPIMVTTSAELAKRVNDIVETKAGSCARKDIIRQSLRDNGLIAVVDNMDEAIKLANMYATEHLCLLVKDSEQYLSRINHAGCIFYGEKASVVMGDYVAGPSHALPTSGTARFSSPLNILDFVKYIDIVNVSKEEVTKLGKAAVTIARAEGLECHAEAALKRME.

3 residues coordinate NAD(+): Y136, Q198, and N221. Residues S244, Q266, and H269 each coordinate substrate. Zn(2+)-binding residues include Q266 and H269. Active-site proton acceptor residues include E334 and H335. Substrate is bound by residues H335, D368, E422, and H427. D368 is a Zn(2+) binding site. H427 is a Zn(2+) binding site.

It belongs to the histidinol dehydrogenase family. Zn(2+) is required as a cofactor.

The catalysed reaction is L-histidinol + 2 NAD(+) + H2O = L-histidine + 2 NADH + 3 H(+). Its pathway is amino-acid biosynthesis; L-histidine biosynthesis; L-histidine from 5-phospho-alpha-D-ribose 1-diphosphate: step 9/9. Its function is as follows. Catalyzes the sequential NAD-dependent oxidations of L-histidinol to L-histidinaldehyde and then to L-histidine. This chain is Histidinol dehydrogenase, found in Dehalococcoides mccartyi (strain ATCC BAA-2266 / KCTC 15142 / 195) (Dehalococcoides ethenogenes (strain 195)).